Here is a 72-residue protein sequence, read N- to C-terminus: Long neurotoxin 1 (72 aa).

5 disulfide bridges follow: Cys-3/Cys-21, Cys-14/Cys-42, Cys-27/Cys-31, Cys-46/Cys-57, and Cys-58/Cys-63.

The protein belongs to the three-finger toxin family. Long-chain subfamily. Type II alpha-neurotoxin sub-subfamily. As to expression, expressed by the venom gland.

Its subcellular location is the secreted. Its function is as follows. Binds with high affinity to muscular (alpha-1/CHRNA1) and neuronal (alpha-7/CHRNA7) nicotinic acetylcholine receptor (nAChR) and inhibits acetylcholine from binding to the receptor, thereby impairing neuromuscular and neuronal transmission. The sequence is that of Long neurotoxin 1 from Naja anchietae (Anchieta's cobra).